A 288-amino-acid chain; its full sequence is Ice-binding protein (288 aa).

A signal peptide spans 1 to 22; sequence MFSTTLINTFSLGLLAVVSVVA. 2 short sequence motifs (ice-binding site motif (T-A/G-X-T/N)) span residues 75 to 78 and 154 to 157; these read TAGN and TAFN. N-linked (GlcNAc...) asparagine glycosylation is present at Asn-194. Short sequence motifs (ice-binding site motif (T-A/G-X-T/N)) lie at residues 196 to 199 and 265 to 268; these read TGVT and TGAT.

The protein belongs to the ice-binding protein family.

It localises to the secreted. In terms of biological role, binds ice crystals and most probably inhibits their growth in order to prevent cell damage from extracellular ice. The protein is Ice-binding protein of Lentinula edodes (Shiitake mushroom).